The chain runs to 781 residues: Cation channel sperm-associated auxiliary subunit delta (781 aa).

The N-terminal stretch at 1–20 is a signal peptide; that stretch reads MLVLMLVVATTFRLCPLVKA. The Extracellular segment spans residues 21–725; it reads RPLCRIRTLR…YGAFPLSIFP (705 aa). Cystine bridges form between cysteine 24–cysteine 370, cysteine 60–cysteine 146, cysteine 145–cysteine 153, cysteine 388–cysteine 497, cysteine 511–cysteine 705, cysteine 526–cysteine 573, and cysteine 625–cysteine 655. N-linked (GlcNAc...) asparagine glycans are attached at residues asparagine 231, asparagine 294, asparagine 458, asparagine 473, asparagine 539, and asparagine 631. Residues 726-749 form a helical membrane-spanning segment; that stretch reads PEITIVLLTAATLLSIWLAYMIPQ. The Cytoplasmic portion of the chain corresponds to 750 to 781; it reads LLHTEQGLEGNGFWVRLYQRCRKSCACLWGRC.

This sequence belongs to the CATSPERD family. Component of the CatSper complex or CatSpermasome composed of the core pore-forming members CATSPER1, CATSPER2, CATSPER3 and CATSPER4 as well as auxiliary members CATSPERB, CATSPERG, CATSPERD, CATSPERE, CATSPERZ, C2CD6/CATSPERT, TMEM249, TMEM262 and EFCAB9. HSPA1 may be an additional auxiliary complex member. The core complex members CATSPER1, CATSPER2, CATSPER3 and CATSPER4 form a heterotetrameric channel. The auxiliary CATSPERB, CATSPERG, CATSPERD and CATSPERE subunits form a pavilion-like structure over the pore which stabilizes the complex through interactions with CATSPER4, CATSPER3, CATSPER1 and CATSPER2 respectively. TMEM262/CATSPERH interacts with CATSPERB, further stabilizing the complex. C2CD6/CATSPERT interacts at least with CATSPERD and is required for targeting the CatSper complex in the flagellar membrane.

The protein resides in the cell projection. Its subcellular location is the cilium. The protein localises to the flagellum membrane. In terms of biological role, auxiliary component of the CatSper complex, a complex involved in sperm cell hyperactivation. Sperm cell hyperactivation is needed for sperm motility which is essential late in the preparation of sperm for fertilization. Required for CATSPER1 stability before intraflagellar transport and/or incorporation of the CatSper complex channel into the flagellar membrane. The protein is Cation channel sperm-associated auxiliary subunit delta of Bos taurus (Bovine).